Consider the following 215-residue polypeptide: Thiamine import ATP-binding protein ThiQ (215 aa).

The region spanning 2-215 (IYLNNVILND…GQISQLQKGV (214 aa)) is the ABC transporter domain. 32 to 39 (GESGAGKS) is an ATP binding site.

It belongs to the ABC transporter superfamily. Thiamine importer (TC 3.A.1.19.1) family. The complex is composed of two ATP-binding proteins (ThiQ), two transmembrane proteins (ThiP) and a solute-binding protein (ThiB).

The protein localises to the cell inner membrane. The catalysed reaction is thiamine(out) + ATP + H2O = thiamine(in) + ADP + phosphate + H(+). Its function is as follows. Part of the ABC transporter complex ThiBPQ involved in thiamine import. Responsible for energy coupling to the transport system. In Haemophilus influenzae (strain 86-028NP), this protein is Thiamine import ATP-binding protein ThiQ.